A 358-amino-acid polypeptide reads, in one-letter code: Peptide chain release factor 1 (358 aa).

The residue at position 237 (Q237) is an N5-methylglutamine.

The protein belongs to the prokaryotic/mitochondrial release factor family. Methylated by PrmC. Methylation increases the termination efficiency of RF1.

Its subcellular location is the cytoplasm. Peptide chain release factor 1 directs the termination of translation in response to the peptide chain termination codons UAG and UAA. This Streptomyces avermitilis (strain ATCC 31267 / DSM 46492 / JCM 5070 / NBRC 14893 / NCIMB 12804 / NRRL 8165 / MA-4680) protein is Peptide chain release factor 1.